The chain runs to 404 residues: 5-azacytidine-induced protein 2 (404 aa).

The homodimerization stretch occupies residues 1–198 (MDTLVEDDIC…TELQKARQTG (198 aa)). Residues 40–198 (ALVTAYEDIK…TELQKARQTG (159 aa)) adopt a coiled-coil conformation. The interval 229–269 (SDHMQHAYWELRREMANLHLVTRVQAELLRQLKTAAAGKAC) is interaction with TBK1 and IKBKE. The residue at position 330 (S330) is a Phosphoserine. 2 disordered regions span residues 332 to 351 (TDNE…HNSY) and 356 to 390 (LEDN…LPPL). S365 carries the post-translational modification Phosphoserine.

As to quaternary structure, homodimer. Interacts with IKBKE, TBK1 and TICAM1. Interacts with TAX1BP1. Interacts with CALCOCO2. Ubiquitinated via 'Lys-48'-linked polyubiquitination by TRIM38, leading to its degradation.

It is found in the cytoplasm. Functionally, adapter protein which binds TBK1 and IKBKE playing a role in antiviral innate immunity. Activates serine/threonine-protein kinase TBK1 and facilitates its oligomerization. Enhances the phosphorylation of NF-kappa-B p65 subunit RELA by TBK1. Promotes TBK1-induced as well as TNF-alpha or PMA-induced activation of NF-kappa-B. Participates in IFNB promoter activation via TICAM1. The chain is 5-azacytidine-induced protein 2 (Azi2) from Rattus norvegicus (Rat).